Reading from the N-terminus, the 426-residue chain is MDTRIKRIIAREILDSRGNPTVEVDITLNNGIRGRAACPSGASTGIHEAVERRDGEKRFGGKGVQGAVQAVMDIISPKLLGRDALEQKSIDSVMIELDGTPNKAKLGANAILTVSMAVARAAANSEDVLLSEYLGPKSTLMPVPCMNIMNGGAHANWQGSDFQEYMIAPVGAPDYPEAVRWGCEVYHSLKSVLKKKGLSTGVGDEGGFAPIVPSNLEPASLIVHAIEEAGYIPGKDIALVLDPASSGFYKDGKYTLKTEKKVLTSEEMTDYYEDMIRTYPIISIEDGLAEDDWEGFAFMTKRLGNTIQIVGDDIFVTNPERIHRGLKEKTANAVLIKLNQIGTVTETIDAIRLAQKAGWGTMVSHRSGETCDSFIADLTVALGCGQLKTGAPCRGERVEKYNQLLRINEFLGDKARYAGRQAFNSA.

Glutamine 163 contacts (2R)-2-phosphoglycerate. Glutamate 205 acts as the Proton donor in catalysis. Residues aspartate 242, glutamate 285, and aspartate 312 each coordinate Mg(2+). (2R)-2-phosphoglycerate contacts are provided by lysine 337, arginine 366, serine 367, and lysine 388. The active-site Proton acceptor is lysine 337.

Belongs to the enolase family. Mg(2+) is required as a cofactor.

It localises to the cytoplasm. The protein localises to the secreted. Its subcellular location is the cell surface. It carries out the reaction (2R)-2-phosphoglycerate = phosphoenolpyruvate + H2O. Its pathway is carbohydrate degradation; glycolysis; pyruvate from D-glyceraldehyde 3-phosphate: step 4/5. Functionally, catalyzes the reversible conversion of 2-phosphoglycerate (2-PG) into phosphoenolpyruvate (PEP). It is essential for the degradation of carbohydrates via glycolysis. This is Enolase 2 from Methanospirillum hungatei JF-1 (strain ATCC 27890 / DSM 864 / NBRC 100397 / JF-1).